The sequence spans 137 residues: Nucleoside diphosphate kinase (137 aa).

Positions 9, 57, 85, 91, 102, and 112 each coordinate ATP. Residue histidine 115 is the Pros-phosphohistidine intermediate of the active site.

Belongs to the NDK family. As to quaternary structure, homotetramer. Mg(2+) serves as cofactor.

Its subcellular location is the cytoplasm. It carries out the reaction a 2'-deoxyribonucleoside 5'-diphosphate + ATP = a 2'-deoxyribonucleoside 5'-triphosphate + ADP. The catalysed reaction is a ribonucleoside 5'-diphosphate + ATP = a ribonucleoside 5'-triphosphate + ADP. Major role in the synthesis of nucleoside triphosphates other than ATP. The ATP gamma phosphate is transferred to the NDP beta phosphate via a ping-pong mechanism, using a phosphorylated active-site intermediate. This chain is Nucleoside diphosphate kinase, found in Campylobacter jejuni subsp. jejuni serotype O:6 (strain 81116 / NCTC 11828).